The sequence spans 1022 residues: Sodium-dependent transporter snf-12 (1022 aa).

The Cytoplasmic portion of the chain corresponds to 1-165 (MNGEWKSALR…RRELWRTQKD (165 aa)). A helical membrane pass occupies residues 166–185 (FFLSCLGFMVGVGHTMRFPA). The Extracellular segment spans residues 186-192 (KVYQHGG). The helical transmembrane segment at 193–213 (GVFFIPYLFSLIFFGLPLVFL) threads the bilayer. Residues 214-241 (HLSLGQYTGQAANTAFQRLMPIGSGVGW) lie on the Cytoplasmic side of the membrane. Residues 242 to 262 (ALVVIAIPVAVYYNIIVAWAI) traverse the membrane as a helical segment. Over 263–337 (HYFFQSAKGL…DFALGPLQSH (75 aa)) the chain is Extracellular. A helical transmembrane segment spans residues 338-358 (LVLSLAAAWLLVFFGVFKGLG). Residue Ser-359 is a topological domain, cytoplasmic. A helical transmembrane segment spans residues 360-380 (IAQTMNVTATVPYLLLSILLL). The Extracellular segment spans residues 381–412 (RGISLPGANKGLTFLFTVDSTKLWKWQIWKSA). The chain crosses the membrane as a helical span at residues 413–433 (AEQVFYELGIDAGPLISMAAF). Residues 434–444 (SRYRNNIYRDS) are Cytoplasmic-facing. The chain crosses the membrane as a helical span at residues 445-465 (VLLVIMDALTSCLSGMVIFSF). Residues 466–498 (VGFIASESNSNVNDVLKHDPLYLSFTVYPGVTS) lie on the Extracellular side of the membrane. The helical transmembrane segment at 499–519 (FMYWGGLWATLFFGMLVLAAI) threads the bilayer. The Cytoplasmic portion of the chain corresponds to 520–550 (DAEFAWLEMIASAFMNHFSMKNKAVENRLLA). Residues 551–571 (FLCLAGFFLGLPLCAQGGIFV) form a helical membrane-spanning segment. The Extracellular portion of the chain corresponds to 572-584 (FHAIENLNANWNS). The chain crosses the membrane as a helical span at residues 585-605 (FSLALLSVAIVCYVYGIDNYL). At 606–641 (TDISAMLRVPRIQISKATRLKEKLIYFFGPGGIYIK) the chain is on the cytoplasmic side. The chain crosses the membrane as a helical span at residues 642–662 (FSLCFICPVILTVLLVASVLG). Residues 663–677 (YQRISFAGRPIPIDY) are Extracellular-facing. A helical membrane pass occupies residues 678-698 (EIVAWIVMIGPLLVVPLVAFM). Residues 699–1022 (QIRQIRNEGK…RPKPIDMPPK (324 aa)) lie on the Cytoplasmic side of the membrane. 2 disordered regions span residues 867-948 (RIPN…SSDD) and 995-1022 (IYDQEQKNGRSKVLSQLKRPKPIDMPPK). Pro residues predominate over residues 893–907 (SDPPVPTSPLPPPPK). The segment covering 933 to 943 (DDSPSISNSSD) has biased composition (low complexity).

Belongs to the sodium:neurotransmitter symporter (SNF) (TC 2.A.22) family. May interact with STAT family transcription factor sta-2; the interaction is probably direct.

It localises to the membrane. Its subcellular location is the cytoplasm. It is found in the vesicle. Functionally, probably mediates sodium-dependent uptake of unknown small molecule(s). By positively modulating expression, in the epidermis, of antimicrobial peptides such as nlp-29, plays a role in resistance to fungal infection and in the response to physical wounding and phorbol ester PMA treatment. Role in response to wounding of the epidermis may be facilitated by recruitment of snf-12 to the wound site by microtubule-dependent vesicle trafficking. Functions cell autonomously in the epidermis, in concert with STAT transcription factor sta-2, probably acting at vesicular membranes, downstream of a p38 MAPK/pmk-1 pathway. This is Sodium-dependent transporter snf-12 from Caenorhabditis elegans.